Here is a 453-residue protein sequence, read N- to C-terminus: Plasticin (453 aa).

Positions 1-51 (MSHSTFSHLFSPHFGAPVYSPVSSRIGGRYVSSSVPTRSVDFRSRSSAPAP) are head. Residues 71–112 (FATRSNEKRELQELNDRFASFIEKVRHLEQQNSKLILELGQY) are coil 1A. The IF rod domain occupies 77–390 (EKRELQELND…KLLEGEENRI (314 aa)). Positions 113–126 (KDQHQGSTGRINEL) are linker 1. A coil 1B region spans residues 127 to 222 (CQQEMRELRR…KMHDEEIQDV (96 aa)). The interval 223 to 245 (QVSVQSQQMKMEVMETSSRPDLT) is linker 12. Residues 246–391 (GALRDIRAQY…LLEGEENRIV (146 aa)) form a coil 2 region. The tail stretch occupies residues 392-453 (VPIMKMPSMS…KKDSHGQGKD (62 aa)). Residues 421 to 453 (IKTVETRDGEVVKESTKEKGRDEKKDSHGQGKD) form a disordered region. Positions 424-453 (VETRDGEVVKESTKEKGRDEKKDSHGQGKD) are enriched in basic and acidic residues.

The protein belongs to the intermediate filament family. As to expression, optic nerve.

Functionally, type III neurofilament. This Carassius auratus (Goldfish) protein is Plasticin.